Consider the following 428-residue polypeptide: Serine--tRNA ligase (428 aa).

Threonine 231 to glutamate 233 is a binding site for L-serine. Arginine 262–glutamate 264 is an ATP binding site. Glutamate 285 contacts L-serine. Glutamate 349–serine 352 is an ATP binding site. Serine 385 contributes to the L-serine binding site.

This sequence belongs to the class-II aminoacyl-tRNA synthetase family. Type-1 seryl-tRNA synthetase subfamily. In terms of assembly, homodimer. The tRNA molecule binds across the dimer.

The protein localises to the cytoplasm. It catalyses the reaction tRNA(Ser) + L-serine + ATP = L-seryl-tRNA(Ser) + AMP + diphosphate + H(+). The enzyme catalyses tRNA(Sec) + L-serine + ATP = L-seryl-tRNA(Sec) + AMP + diphosphate + H(+). It functions in the pathway aminoacyl-tRNA biosynthesis; selenocysteinyl-tRNA(Sec) biosynthesis; L-seryl-tRNA(Sec) from L-serine and tRNA(Sec): step 1/1. Its function is as follows. Catalyzes the attachment of serine to tRNA(Ser). Is also able to aminoacylate tRNA(Sec) with serine, to form the misacylated tRNA L-seryl-tRNA(Sec), which will be further converted into selenocysteinyl-tRNA(Sec). The protein is Serine--tRNA ligase of Methylorubrum extorquens (strain PA1) (Methylobacterium extorquens).